Reading from the N-terminus, the 413-residue chain is Gamma-glutamyl phosphate reductase (413 aa).

This sequence belongs to the gamma-glutamyl phosphate reductase family.

Its subcellular location is the cytoplasm. It catalyses the reaction L-glutamate 5-semialdehyde + phosphate + NADP(+) = L-glutamyl 5-phosphate + NADPH + H(+). Its pathway is amino-acid biosynthesis; L-proline biosynthesis; L-glutamate 5-semialdehyde from L-glutamate: step 2/2. In terms of biological role, catalyzes the NADPH-dependent reduction of L-glutamate 5-phosphate into L-glutamate 5-semialdehyde and phosphate. The product spontaneously undergoes cyclization to form 1-pyrroline-5-carboxylate. The protein is Gamma-glutamyl phosphate reductase of Salinispora tropica (strain ATCC BAA-916 / DSM 44818 / JCM 13857 / NBRC 105044 / CNB-440).